The following is an 878-amino-acid chain: Probable outer membrane protein PmpI (878 aa).

Positions methionine 1–glycine 24 are cleaved as a signal peptide. Low complexity predominate over residues serine 360–glutamine 371. Residues serine 360–threonine 381 form a disordered region. The segment covering alanine 372–threonine 381 has biased composition (polar residues). In terms of domain architecture, Autotransporter spans glycine 602–phenylalanine 878.

Belongs to the PMP outer membrane protein family.

It localises to the secreted. Its subcellular location is the cell wall. It is found in the cell outer membrane. This chain is Probable outer membrane protein PmpI (pmpI), found in Chlamydia trachomatis serovar D (strain ATCC VR-885 / DSM 19411 / UW-3/Cx).